Consider the following 146-residue polypeptide: UPF0260 protein VP2169 (146 aa).

Belongs to the UPF0260 family.

This Vibrio parahaemolyticus serotype O3:K6 (strain RIMD 2210633) protein is UPF0260 protein VP2169.